A 222-amino-acid chain; its full sequence is 6,7-dimethyl-8-ribityllumazine synthase, chloroplastic (222 aa).

The transit peptide at 1 to 66 (MASFAASQTC…NRASFVVTNA (66 aa)) directs the protein to the chloroplast. 5-amino-6-(D-ribitylamino)uracil-binding positions include phenylalanine 89, 122–124 (AYE), and 146–148 (AVV). Residue 151–152 (DT) coordinates (2S)-2-hydroxy-3-oxobutyl phosphate. Histidine 154 (proton donor) is an active-site residue. Phenylalanine 179 provides a ligand contact to 5-amino-6-(D-ribitylamino)uracil. Residue arginine 193 coordinates (2S)-2-hydroxy-3-oxobutyl phosphate.

The protein belongs to the DMRL synthase family. As to quaternary structure, oligomer forming an icosahedral capsid.

The protein localises to the plastid. It is found in the chloroplast. It catalyses the reaction (2S)-2-hydroxy-3-oxobutyl phosphate + 5-amino-6-(D-ribitylamino)uracil = 6,7-dimethyl-8-(1-D-ribityl)lumazine + phosphate + 2 H2O + H(+). The protein operates within cofactor biosynthesis; riboflavin biosynthesis; riboflavin from 2-hydroxy-3-oxobutyl phosphate and 5-amino-6-(D-ribitylamino)uracil: step 1/2. Its function is as follows. Catalyzes the formation of 6,7-dimethyl-8-ribityllumazine by condensation of 5-amino-6-(D-ribitylamino)uracil with 3,4-dihydroxy-2-butanone 4-phosphate. This is the penultimate step in the biosynthesis of riboflavin. The sequence is that of 6,7-dimethyl-8-ribityllumazine synthase, chloroplastic from Spinacia oleracea (Spinach).